The sequence spans 143 residues: ATP synthase epsilon chain (143 aa).

The protein belongs to the ATPase epsilon chain family. As to quaternary structure, F-type ATPases have 2 components, CF(1) - the catalytic core - and CF(0) - the membrane proton channel. CF(1) has five subunits: alpha(3), beta(3), gamma(1), delta(1), epsilon(1). CF(0) has three main subunits: a, b and c.

It localises to the cell inner membrane. Its function is as follows. Produces ATP from ADP in the presence of a proton gradient across the membrane. The sequence is that of ATP synthase epsilon chain from Dichelobacter nodosus (strain VCS1703A).